We begin with the raw amino-acid sequence, 429 residues long: Argininosuccinate lyase (429 aa).

The protein belongs to the lyase 1 family. Argininosuccinate lyase subfamily.

It localises to the cytoplasm. It catalyses the reaction 2-(N(omega)-L-arginino)succinate = fumarate + L-arginine. It participates in amino-acid biosynthesis; L-arginine biosynthesis; L-arginine from L-ornithine and carbamoyl phosphate: step 3/3. The polypeptide is Argininosuccinate lyase (Pyrobaculum calidifontis (strain DSM 21063 / JCM 11548 / VA1)).